Reading from the N-terminus, the 72-residue chain is Translation initiation factor IF-1 (72 aa).

In terms of domain architecture, S1-like spans 1–72 (MAKEDSIEMQ…TKGRIVFRAR (72 aa)).

The protein belongs to the IF-1 family. In terms of assembly, component of the 30S ribosomal translation pre-initiation complex which assembles on the 30S ribosome in the order IF-2 and IF-3, IF-1 and N-formylmethionyl-tRNA(fMet); mRNA recruitment can occur at any time during PIC assembly.

Its subcellular location is the cytoplasm. Its function is as follows. One of the essential components for the initiation of protein synthesis. Stabilizes the binding of IF-2 and IF-3 on the 30S subunit to which N-formylmethionyl-tRNA(fMet) subsequently binds. Helps modulate mRNA selection, yielding the 30S pre-initiation complex (PIC). Upon addition of the 50S ribosomal subunit IF-1, IF-2 and IF-3 are released leaving the mature 70S translation initiation complex. The polypeptide is Translation initiation factor IF-1 (Shewanella amazonensis (strain ATCC BAA-1098 / SB2B)).